We begin with the raw amino-acid sequence, 216 residues long: Phosphatidylserine decarboxylase proenzyme (216 aa).

Residue Ser-183 is the Schiff-base intermediate with substrate; via pyruvic acid of the active site. Ser-183 is subject to Pyruvic acid (Ser); by autocatalysis.

The protein belongs to the phosphatidylserine decarboxylase family. PSD-A subfamily. In terms of assembly, heterodimer of a large membrane-associated beta subunit and a small pyruvoyl-containing alpha subunit. Requires pyruvate as cofactor. In terms of processing, is synthesized initially as an inactive proenzyme. Formation of the active enzyme involves a self-maturation process in which the active site pyruvoyl group is generated from an internal serine residue via an autocatalytic post-translational modification. Two non-identical subunits are generated from the proenzyme in this reaction, and the pyruvate is formed at the N-terminus of the alpha chain, which is derived from the carboxyl end of the proenzyme. The post-translation cleavage follows an unusual pathway, termed non-hydrolytic serinolysis, in which the side chain hydroxyl group of the serine supplies its oxygen atom to form the C-terminus of the beta chain, while the remainder of the serine residue undergoes an oxidative deamination to produce ammonia and the pyruvoyl prosthetic group on the alpha chain.

Its subcellular location is the cell membrane. The enzyme catalyses a 1,2-diacyl-sn-glycero-3-phospho-L-serine + H(+) = a 1,2-diacyl-sn-glycero-3-phosphoethanolamine + CO2. The protein operates within phospholipid metabolism; phosphatidylethanolamine biosynthesis; phosphatidylethanolamine from CDP-diacylglycerol: step 2/2. Its function is as follows. Catalyzes the formation of phosphatidylethanolamine (PtdEtn) from phosphatidylserine (PtdSer). The sequence is that of Phosphatidylserine decarboxylase proenzyme from Cupriavidus taiwanensis (strain DSM 17343 / BCRC 17206 / CCUG 44338 / CIP 107171 / LMG 19424 / R1) (Ralstonia taiwanensis (strain LMG 19424)).